The sequence spans 303 residues: Small ribosomal subunit protein bS1m (303 aa).

Ser-2 is subject to N-acetylserine. The N-terminal 12 residues, 2–13 (SFAQILRGSRAM), are a transit peptide targeting the mitochondrion; not cleaved.

Belongs to the bacterial ribosomal protein bS1 family. Component of the mitochondrial small ribosomal subunit (mt-SSU). Mature yeast 74S mitochondrial ribosomes consist of a small (37S) and a large (54S) subunit. The 37S small subunit contains a 15S ribosomal RNA (15S mt-rRNA) and at least 32 different proteins. The 54S large subunit contains a 21S rRNA (21S mt-rRNA) and at least 45 different proteins. This subunit is mutually exclusive with mug178/small ribosomal subunit protein L51-b.

The protein resides in the mitochondrion. Component of the mitochondrial ribosome (mitoribosome), a dedicated translation machinery responsible for the synthesis of mitochondrial genome-encoded proteins, including at least some of the essential transmembrane subunits of the mitochondrial respiratory chain. The mitoribosomes are attached to the mitochondrial inner membrane and translation products are cotranslationally integrated into the membrane. bS1m functionally interacts with the 5'-UTR of mitochondrial mRNAs. Plays an essential role in mitochondrial translation. The polypeptide is Small ribosomal subunit protein bS1m (mrp51) (Schizosaccharomyces pombe (strain 972 / ATCC 24843) (Fission yeast)).